A 709-amino-acid chain; its full sequence is Protein SOSEKI 3 (709 aa).

Residues 8-101 (SSVQVLYQLS…YVLRASELFD (94 aa)) form a DIX-like oligomerization domain region. Disordered stretches follow at residues 242–266 (LHTP…AKRM), 315–344 (RDGR…AEQS), 358–393 (GGSS…KTPC), 411–439 (PSPA…NRPS), and 506–560 (DSPT…DTKP). Basic and acidic residues predominate over residues 329-342 (ELREVQNEKEKEAE). Basic and acidic residues predominate over residues 417 to 436 (NKAHSSLDRQEIPPQEECKN). The span at 529-544 (VKTSNSLPRVKTTTSP) shows a compositional bias: polar residues. A C2HC/C3H-type zinc finger spans residues 663 to 692 (ILQECSTCGRTFKPDSLQVHMRGCHPPQYA). Zn(2+) is bound by residues Cys667, Cys670, His682, and Cys686.

It belongs to the SOSEKI family. In terms of assembly, homodimer. Forms long polymer filaments with other SOKs proteins polymers crucial for polar localization and biological activity. Zn(2+) is required as a cofactor.

The protein resides in the cell membrane. SOSEKI proteins locally interpret global polarity cues and can influence cell division orientation to coordinate cell polarization relative to body axes. This chain is Protein SOSEKI 3, found in Physcomitrium patens (Spreading-leaved earth moss).